The chain runs to 347 residues: NADH-ubiquinone oxidoreductase chain 2 (347 aa).

A run of 11 helical transmembrane segments spans residues 1 to 21 (MNPA…MIVT), 25 to 45 (HWLT…PILM), 59 to 79 (YFLT…INLV), 96 to 116 (ITMT…FWVP), 127 to 147 (GLIL…QISP), 149 to 169 (INLE…GWGG), 178 to 198 (IMAY…AYNP), 201 to 221 (TLLN…MLML), 240 to 260 (LATT…LSGF), 274 to 294 (DSII…YFYM), and 326 to 346 (ISPL…LTLL).

This sequence belongs to the complex I subunit 2 family. In terms of assembly, core subunit of respiratory chain NADH dehydrogenase (Complex I) which is composed of 45 different subunits. Interacts with TMEM242.

The protein localises to the mitochondrion inner membrane. The enzyme catalyses a ubiquinone + NADH + 5 H(+)(in) = a ubiquinol + NAD(+) + 4 H(+)(out). Core subunit of the mitochondrial membrane respiratory chain NADH dehydrogenase (Complex I) which catalyzes electron transfer from NADH through the respiratory chain, using ubiquinone as an electron acceptor. Essential for the catalytic activity and assembly of complex I. The protein is NADH-ubiquinone oxidoreductase chain 2 of Dobsonia minor (Lesser bare-backed fruit bat).